Reading from the N-terminus, the 197-residue chain is Potassium-transporting ATPase KdpC subunit (197 aa).

A helical transmembrane segment spans residues 9–29; it reads LVVTLLLAALLCGAYPVLVTG.

This sequence belongs to the KdpC family. In terms of assembly, the system is composed of three essential subunits: KdpA, KdpB and KdpC.

The protein localises to the cell inner membrane. Its function is as follows. Part of the high-affinity ATP-driven potassium transport (or Kdp) system, which catalyzes the hydrolysis of ATP coupled with the electrogenic transport of potassium into the cytoplasm. This subunit acts as a catalytic chaperone that increases the ATP-binding affinity of the ATP-hydrolyzing subunit KdpB by the formation of a transient KdpB/KdpC/ATP ternary complex. The protein is Potassium-transporting ATPase KdpC subunit of Nitratidesulfovibrio vulgaris (strain DSM 19637 / Miyazaki F) (Desulfovibrio vulgaris).